Here is a 426-residue protein sequence, read N- to C-terminus: Elongation factor Tu, mitochondrial (426 aa).

Residues 1-27 (MFKNLAGSFRAVSRVAFKTRPSLVRSY) constitute a mitochondrion transit peptide. The 197-residue stretch at 34 to 230 (KPHVNIGTIG…AVDEHIPTPT (197 aa)) folds into the tr-type G domain. The interval 43-50 (GHVDHGKT) is G1. 43–50 (GHVDHGKT) serves as a coordination point for GTP. Positions 84 to 88 (GITIS) are G2. Residues 105-108 (DCPG) are G3. Residues 105–109 (DCPGH) and 160–163 (NKVD) contribute to the GTP site. Residues 160 to 163 (NKVD) form a G4 region. The tract at residues 198–200 (SAL) is G5.

It belongs to the TRAFAC class translation factor GTPase superfamily. Classic translation factor GTPase family. EF-Tu/EF-1A subfamily.

Its subcellular location is the mitochondrion. It functions in the pathway protein biosynthesis; polypeptide chain elongation. G-protein that, in its active GTP-bound form, binds to and delivers aminoacyl-tRNA to the A-site of ribosomes during protein biosynthesis. In the presence of a correct codon-anticodon match between the aminoacyl-tRNA and the A-site codon of the ribosome-bound mRNA, the ribosome acts as a GTPase activator and the GTP is hydrolyzed. The inactive GDP-bound form leaves the ribosome and must be recycled before binding another molecule of aminoacyl-tRNA. Required for mitochondrial protein biosynthesis and maintenance of mitochondrial DNA. The sequence is that of Elongation factor Tu, mitochondrial (TUF1) from Meyerozyma guilliermondii (strain ATCC 6260 / CBS 566 / DSM 6381 / JCM 1539 / NBRC 10279 / NRRL Y-324) (Yeast).